Here is a 387-residue protein sequence, read N- to C-terminus: Patatin-02 (387 aa).

The first 23 residues, 1-23 (MATTKSFLILIVMILATTSSTFA), serve as a signal peptide directing secretion. The 199-residue stretch at 32–230 (LSIDGGGIKG…TVADPALLSV (199 aa)) folds into the PNPLA domain. The GXGXXG signature appears at 36-41 (GGGIKG). A GXSXG motif is present at residues 75–79 (GTSTG). The active-site Nucleophile is the serine 77. Asparagine 115 carries N-linked (GlcNAc...) asparagine glycosylation. Aspartate 216 functions as the Proton acceptor in the catalytic mechanism. Residues 216 to 218 (DGA) carry the DGA/G motif. A coiled-coil region spans residues 361 to 385 (ETYEEALKRFAKLLSDRKKLRANKA).

This sequence belongs to the patatin family. As to expression, tuber and stolon.

Its subcellular location is the vacuole. Its function is as follows. Probable lipolytic acyl hydrolase (LAH), an activity which is thought to be involved in the response of tubers to pathogens. This chain is Patatin-02, found in Solanum tuberosum (Potato).